We begin with the raw amino-acid sequence, 312 residues long: Protoheme IX farnesyltransferase (312 aa).

The next 8 membrane-spanning stretches (helical) occupy residues 31 to 51, 52 to 72, 119 to 139, 152 to 172, 179 to 199, 225 to 245, 247 to 267, and 288 to 308; these read VMSL…GSFH, PVLA…AGAL, ILVN…YVVI, IVIG…SVTG, ILLF…LALF, ILLY…LGYF, VIYG…AVRV, and ILYL…AAVL.

The protein belongs to the UbiA prenyltransferase family. Protoheme IX farnesyltransferase subfamily.

It is found in the cell inner membrane. The enzyme catalyses heme b + (2E,6E)-farnesyl diphosphate + H2O = Fe(II)-heme o + diphosphate. It functions in the pathway porphyrin-containing compound metabolism; heme O biosynthesis; heme O from protoheme: step 1/1. Its function is as follows. Converts heme B (protoheme IX) to heme O by substitution of the vinyl group on carbon 2 of heme B porphyrin ring with a hydroxyethyl farnesyl side group. The protein is Protoheme IX farnesyltransferase of Rhodopseudomonas palustris (strain ATCC BAA-98 / CGA009).